Consider the following 63-residue polypeptide: Anaphase-promoting complex subunit 13 (63 aa).

Positions 36–63 (KTDDTEETNQETQQADAETWRDLALDTQ) are disordered. The span at 53–63 (ETWRDLALDTQ) shows a compositional bias: basic and acidic residues.

It belongs to the APC13 family. As to quaternary structure, component of the anaphase promoting complex/cyclosome (APC/C) complex. In terms of tissue distribution, expressed constitutively in roots, leaves, stems, buds, flowers, and seeds.

The protein localises to the nucleus. The protein operates within protein modification; protein ubiquitination. Its function is as follows. Component of the anaphase promoting complex/cyclosome (APC/C), a cell cycle-regulated E3 ubiquitin ligase that controls progression through mitosis and the G1 phase of the cell cycle. The APC/C complex acts by mediating ubiquitination and subsequent degradation of target proteins. Regulates global growth and development, including phyllotaxis and apical dominance. Required for pollen maturation. Promotes (pri) miRNA transcription of each MIR159 genes. The protein is Anaphase-promoting complex subunit 13 of Arabidopsis thaliana (Mouse-ear cress).